The primary structure comprises 524 residues: Acetyl-CoA hydrolase (524 aa).

Position 279–283 (279–283 (GIGNI)) interacts with CoA. Glu-304 (5-glutamyl coenzyme A thioester intermediate) is an active-site residue. Residue Gly-398 coordinates CoA.

Belongs to the acetyl-CoA hydrolase/transferase family.

The protein localises to the cytoplasm. It carries out the reaction acetyl-CoA + H2O = acetate + CoA + H(+). In terms of biological role, presumably involved in regulating the intracellular acetyl-CoA pool for fatty acid and cholesterol synthesis and fatty acid oxidation. This chain is Acetyl-CoA hydrolase (ACH1), found in Yarrowia lipolytica (strain CLIB 122 / E 150) (Yeast).